We begin with the raw amino-acid sequence, 490 residues long: Asparagine--tRNA ligase (490 aa).

It belongs to the class-II aminoacyl-tRNA synthetase family. In terms of assembly, homodimer.

The protein resides in the cytoplasm. The enzyme catalyses tRNA(Asn) + L-asparagine + ATP = L-asparaginyl-tRNA(Asn) + AMP + diphosphate + H(+). The sequence is that of Asparagine--tRNA ligase from Rhodopirellula baltica (strain DSM 10527 / NCIMB 13988 / SH1).